Reading from the N-terminus, the 333-residue chain is L-asparagine oxygenase (333 aa).

Glu125 and Asn146 together coordinate L-asparagine. Fe cation is bound by residues His155 and Glu157. Glu157 and Asn158 together coordinate L-asparagine. A Fe cation-binding site is contributed by His287. Arg301 contacts 2-oxoglutarate. Position 305 (Arg305) interacts with L-asparagine.

This sequence belongs to the clavaminate synthase family. The cofactor is Fe(2+).

The enzyme catalyses L-asparagine + 2-oxoglutarate + O2 = (2S,3S)-3-hydroxyasparagine + succinate + CO2. The protein operates within antibiotic biosynthesis; calcium-dependent antibiotic biosynthesis. Its function is as follows. Catalyzes the 3-hydroxylation of L-asparagine to (2S,3S)-3-hydroxyasparagine. The 3-hydroxylated asparagine produced is incorporated at position 9 during the biosynthesis of the non-ribosomally synthesized calcium-dependent antibiotic (CDA), a 11-residue acidic lipopeptide lactone. Is able to hydroxylate only free L-asparagine, since it hydroxylates neither a CDA analog with unmodified Asn at position 9 nor a peptidyl-carrier-protein (PCP)-bound asparagine. Is not active toward D-asparagine. In Streptomyces coelicolor (strain ATCC BAA-471 / A3(2) / M145), this protein is L-asparagine oxygenase (asnO).